The chain runs to 194 residues: HTH-type transcriptional regulator BetI (194 aa).

Residues 8 to 68 enclose the HTH tetR-type domain; the sequence is EIRRAQLIDA…ATMRHVLRDL (61 aa). Residues 31–50 constitute a DNA-binding region (H-T-H motif); it reads TLASVAQRANISTGIVSHYF.

It functions in the pathway amine and polyamine biosynthesis; betaine biosynthesis via choline pathway [regulation]. Functionally, repressor involved in the biosynthesis of the osmoprotectant glycine betaine. It represses transcription of the choline transporter BetT and the genes of BetAB involved in the synthesis of glycine betaine. The chain is HTH-type transcriptional regulator BetI from Burkholderia cenocepacia (strain HI2424).